The chain runs to 334 residues: Petrobactin import system permease protein FatD (334 aa).

9 consecutive transmembrane segments (helical) span residues 24-44, 64-84, 98-118, 119-139, 152-172, 197-217, 234-254, 277-297, and 304-324; these read FIIA…TGVY, TVAL…MQLI, IEWS…PTLV, QRMT…FLFL, IIGL…GLLF, LWLI…LTLA, IVLF…AVIG, SNLP…DIIS, and FELP…ITIL.

Belongs to the binding-protein-dependent transport system permease family. FecCD subfamily. The complex is composed of two ATP-binding proteins (FatE), two transmembrane proteins (FatC and FatD) and a solute-binding protein (FpuA).

The protein localises to the cell membrane. Part of an ABC transporter complex involved in ferric-petrobactin uptake. Probably responsible for the translocation of the substrate across the membrane. The chain is Petrobactin import system permease protein FatD from Bacillus anthracis.